The following is a 468-amino-acid chain: O-methyltransferase lcsG (468 aa).

Positions methionine 1–alanine 12 are enriched in polar residues. A disordered region spans residues methionine 1–serine 29. S-adenosyl-L-methionine contacts are provided by residues glycine 298–glycine 299, aspartate 321, aspartate 348–phenylalanine 349, and lysine 363.

The protein belongs to the class I-like SAM-binding methyltransferase superfamily. Cation-independent O-methyltransferase family.

It participates in secondary metabolite biosynthesis. Functionally, O-methyltransferase; part of the gene cluster that mediates the biosynthesis of the lipopeptide antibiotics leucinostatins that show extensive biological activities, including antimalarial, antiviral, antibacterial, antifungal, and antitumor activities, as well as phytotoxic. Leucinostatin A contains nine amino acid residues, including the unusual amino acid 4-methyl-L-proline (MePro), 2-amino-6-hydroxy-4-methyl-8-oxodecanoic acid (AHyMeOA), 3-hydroxyleucine (HyLeu), alpha-aminoisobutyric acid (AIB), beta-Ala, a 4-methylhex-2-enoic acid at the N-terminus as well as a N1,N1-dimethylpropane-1,2-diamine (DPD) at the C-terminus. The biosynthesis of leucinostatins is probably initiated with the assembly of 4-methylhex-2-enoic acid by a reducing PKS. Two reducing polyketide synthases, lcsB and lcsC, have been identified in the cluster and it is not clear which is the one that assembles 4-methylhex-2-enoic acid since both contain KS, AT, DH, cMT, ER, KR and ACP domains. The polyketide residue might be transferred to the NRPS lcsA, mediated by two additional enzymes, the acyl-CoA ligase lcsD and the thioesterase lcsE. The linear polyketide carboxylic acid, which is released from PKS, is converted to a CoA thioester by lcsD, and then lcsE hydrolyzes the thiol bond and shuttles the polyketide intermediate to lcsA. The C domain of the first module catalyzed the condensation of 4-methylhex-2-enoic acid and MePro carried by domain A1, followed by successive condensations of nine amino acids to trigger the elongation of the linear peptide. A5 and A6 domains of lcsA are proposed to incorporate leucine, A2 AHyMeOA, and A3 incorporates HyLeu. A4, A7 and A8 incorporate AIB. The AHyMeOA in leucinostatin A activated by the A2 might be produced by the second PKS (lcsB or lcsC) present within the cluster. The MePro is probably produced via leucine cyclization and may originate from a separate pathway, independent of the cluster. Another nonproteinogenic amino acid, beta-Ala, could be produced by an aspartic acid decarboxylase also localized outside of the cluster. Two candidates are VFPBJ_01400 and VFPBJ_10476. The final peptide scaffold may be released by the NAD(P)H-dependent thioester reductase (TE) at the C-terminal region of lcsA. Transamination of the lcsA product by the transaminase lcsP may produce DPD at the C-terminus. Further hydroxylation steps performed alternatively by the cytochrome P450 monooxygenases lcsI, lcsK and lcsN then yield the non-methylated leucinostatins precursor. It is also possible that leucines can be hydroxylated prior to their incorporation into the peptide. Varying extents of methylation then lead to the formation of leucinostatins A and B. The polypeptide is O-methyltransferase lcsG (Purpureocillium lilacinum (Paecilomyces lilacinus)).